The primary structure comprises 164 residues: Vasopressin-neurophysin 2-copeptin (164 aa).

Residues 1-19 (MPDTMLPACFLGLLAFSSA) form the signal peptide. C20 and C25 are joined by a disulfide. The residue at position 28 (G28) is a Glycine amide. 7 disulfides stabilise this stretch: C41–C85, C44–C58, C52–C75, C59–C65, C92–C104, C98–C116, and C105–C110. N-linked (GlcNAc...) asparagine glycosylation occurs at N131.

The protein belongs to the vasopressin/oxytocin family. Interacts with vasopressin receptors V1bR/AVPR1B (Ki=85 pM), V1aR/AVPR1A (Ki=0.6 nM) and V2R/AVPR2 (Ki=4.9 nM). Interacts with oxytocin receptor (OXTR) (Ki=110 nM). In terms of assembly, (Microbial infection) May interact with SARS coronavirus-2/SARS-CoV-2; they may form a complex with secreted ACE2.

It is found in the secreted. Its function is as follows. Specifically binds vasopressin. Has a direct antidiuretic action on the kidney, it also causes vasoconstriction of the peripheral vessels. Acts by binding to vasopressin receptors (V1bR/AVPR1B, V1aR/AVPR1A, and V2R/AVPR2). The chain is Vasopressin-neurophysin 2-copeptin (AVP) from Homo sapiens (Human).